Reading from the N-terminus, the 278-residue chain is Hydroxyethylthiazole kinase (278 aa).

Methionine 48 is a substrate binding site. Arginine 124 and threonine 175 together coordinate ATP. Glycine 202 contributes to the substrate binding site.

This sequence belongs to the Thz kinase family. Mg(2+) is required as a cofactor.

It carries out the reaction 5-(2-hydroxyethyl)-4-methylthiazole + ATP = 4-methyl-5-(2-phosphooxyethyl)-thiazole + ADP + H(+). It functions in the pathway cofactor biosynthesis; thiamine diphosphate biosynthesis; 4-methyl-5-(2-phosphoethyl)-thiazole from 5-(2-hydroxyethyl)-4-methylthiazole: step 1/1. Functionally, catalyzes the phosphorylation of the hydroxyl group of 4-methyl-5-beta-hydroxyethylthiazole (THZ). This is Hydroxyethylthiazole kinase from Clostridium botulinum (strain Alaska E43 / Type E3).